The primary structure comprises 116 residues: Large ribosomal subunit protein bL19 (116 aa).

The protein belongs to the bacterial ribosomal protein bL19 family.

Functionally, this protein is located at the 30S-50S ribosomal subunit interface and may play a role in the structure and function of the aminoacyl-tRNA binding site. In Shewanella loihica (strain ATCC BAA-1088 / PV-4), this protein is Large ribosomal subunit protein bL19.